The chain runs to 342 residues: MTHSLKPWNTFGIDHCAKHIVCAENEQQLLSAWQQATREGLPVMILGEGSNVLFLENYAGTVILNRLKGIEVNETADAWHLHVGAGENWHQLVRYALDNNMPGLENLALIPGCVGSSPIQNIGAYGVELHRVCDYVDCVELETGKRLRLSAAECRFGYRDSIFKNEYQDRVAIVAVGLRLSKQWQPVLTYGDLTRLDPKTVTAQQVFDAVCHMRTTKLPDPKVNGNAGSFFKNPVVAADIAMELLERFPNAPHYPQADGSVKLAAGWLIDQCQLKGVTIGGAAVHRQQALVLINANDATSKDVVALAHHVRQKVGEKFNVWLEPEVRFIGQFGEVNAVESIA.

The FAD-binding PCMH-type domain occupies 13 to 183; sequence IDHCAKHIVC…VAVGLRLSKQ (171 aa). The active site involves Arg-159. Ser-229 acts as the Proton donor in catalysis. Glu-325 is an active-site residue.

Belongs to the MurB family. FAD is required as a cofactor.

It localises to the cytoplasm. The catalysed reaction is UDP-N-acetyl-alpha-D-muramate + NADP(+) = UDP-N-acetyl-3-O-(1-carboxyvinyl)-alpha-D-glucosamine + NADPH + H(+). Its pathway is cell wall biogenesis; peptidoglycan biosynthesis. Cell wall formation. The chain is UDP-N-acetylenolpyruvoylglucosamine reductase from Salmonella typhi.